The sequence spans 122 residues: Secreted RxLR effector protein RXLR-C251 (122 aa).

The N-terminal stretch at 1-24 (MRFFYKLALMTTVASLACSDTALA) is a signal peptide. Positions 48–51 (RSLR) match the RxLR motif.

It belongs to the RxLR effector family.

The protein localises to the secreted. It localises to the host cytoplasm. It is found in the host nucleus. Functionally, secreted effector that does not suppress pattern-triggered immunity (PTI) in plant host. The chain is Secreted RxLR effector protein RXLR-C251 from Plasmopara halstedii (Downy mildew of sunflower).